The following is a 256-amino-acid chain: MALAKRIIPCLDVDNGRVVKGVKFENIRDAGDPVEIARRYDEQGADEITFLDITASVDGRDTTLHTVERMASQVFIPLTVGGGVRTVQDIRNLLNAGADKVSINTAAVFNPEFVGEAAARFGSQCIVVAIDAKRVSAPGEPGRWEIFTHGGRKPTGLDAVEWARKMEGLGAGEILLTSMDQDGVKSGYDLGVTRAISEAVRVPVIASGGVGNLQHLADGILEGKADAVLAASIFHFGEYTVPEAKAYLASRGIVVR.

Catalysis depends on residues aspartate 12 and aspartate 131.

Belongs to the HisA/HisF family. As to quaternary structure, heterodimer of HisH and HisF.

The protein resides in the cytoplasm. The catalysed reaction is 5-[(5-phospho-1-deoxy-D-ribulos-1-ylimino)methylamino]-1-(5-phospho-beta-D-ribosyl)imidazole-4-carboxamide + L-glutamine = D-erythro-1-(imidazol-4-yl)glycerol 3-phosphate + 5-amino-1-(5-phospho-beta-D-ribosyl)imidazole-4-carboxamide + L-glutamate + H(+). It participates in amino-acid biosynthesis; L-histidine biosynthesis; L-histidine from 5-phospho-alpha-D-ribose 1-diphosphate: step 5/9. Functionally, IGPS catalyzes the conversion of PRFAR and glutamine to IGP, AICAR and glutamate. The HisF subunit catalyzes the cyclization activity that produces IGP and AICAR from PRFAR using the ammonia provided by the HisH subunit. The sequence is that of Imidazole glycerol phosphate synthase subunit HisF from Ectopseudomonas mendocina (strain ymp) (Pseudomonas mendocina).